A 431-amino-acid polypeptide reads, in one-letter code: Forkhead box protein P3 (431 aa).

The segment at 1-68 (MPNPRPGKPS…SSLNPMPPSQ (68 aa)) is disordered. Residues 10-25 (SAPSLALGPSPGASPS) show a composition bias toward low complexity. Residue Ser-19 is modified to Phosphoserine; by CDK2. Position 31 is an N6-acetyllysine (Lys-31). The short motif at 68-76 (QLQLPTLPL) is the Nuclear export signal element. The short motif at 92 to 96 (LQALL) is the LXXLL motif element. The segment at 106-190 (LSTVDAHART…STLSAVPQSS (85 aa)) is essential for transcriptional repressor activity and for interaction with KAT5 and HDAC7. The segment at 106–198 (LSTVDAHART…SSYPLLANGV (93 aa)) is interaction with ZFP90. Residues 149–199 (LPPGINVASLEWVSREPALLCTFPNPSAPRKDSTLSAVPQSSYPLLANGVC) are interaction with IKZF4. The C2H2-type zinc finger occupies 197-222 (GVCKWPGCEKVFEEPEDFLKHCQADH). The Nuclear export signal signature appears at 239 to 248 (VQSLEQQLVL). The interval 239–260 (VQSLEQQLVLEKEKLSAMQAHL) is leucine-zipper. Residues Lys-250 and Lys-252 each participate in a glycyl lysine isopeptide (Lys-Gly) (interchain with G-Cter in ubiquitin) cross-link. An N6-acetyllysine; alternate mark is found at Lys-263 and Lys-268. Glycyl lysine isopeptide (Lys-Gly) (interchain with G-Cter in ubiquitin); alternate cross-links involve residues Lys-263 and Lys-268. Positions 278-336 (GSCCIVAAGSQGPVVPAWSGPREAPDSLFAVRRHLWGSHGNSTFPEFLHNMDYFKFHNM) are interaction with RUNX1. The fork-head DNA-binding region spans 337-423 (RPPFTYATLI…RKKRSQRPSR (87 aa)). Residue Lys-393 forms a Glycyl lysine isopeptide (Lys-Gly) (interchain with G-Cter in ubiquitin) linkage. The Nuclear localization signal motif lies at 414-417 (RKKR). Ser-418 carries the phosphoserine modification. Positions 418 to 431 (SQRPSRCSNPTPGP) are excised as a propeptide.

In terms of assembly, homodimer. Dimerization is essential for its transcriptional regulator activity. Interacts with IKZF3. Isoform 1 (via LXXLL motif), but not isoform 2, interacts with isoform 4 of RORA (via AF-2 motif). Interacts with STUB1, HSPA8 and HSPA1A/B. Interacts with PPP1CA, PPP1CB and PPP1CG. Interacts with KAT5 and HDAC7. Interacts with HDAC9 in the absence of T-cell stimulation. Interacts with USP7. Interacts with isoform 2 of ZFP90 and can form a complex with TRIM28 in the presence of isoform 2 of ZFP90. Interacts with RUNX1. Interacts with RORC. Interacts with RELA and NFATC2. Interacts with RUNX2, RUNX3 and IKZF4. In terms of processing, polyubiquitinated, leading to its proteasomal degradation in regulatory T-cells (Treg) which is mediated by STUB1 in a HSPA1A/B-dependent manner. Deubiquitinated by USP7 and USP44; leading to increase in protein stability. Post-translationally, phosphorylation at Ser-418 regulates its transcriptional repressor activity and consequently, regulatory T-cells (Treg) suppressive function. Dephosphorylated at Ser-418 by protein phosphatase 1 (PP1) in Treg cells derived from patients with rheumatoid arthritis. Phosphorylation by CDK2 negatively regulates its transcriptional activity and protein stability. Acetylation on lysine residues stabilizes FOXP3 and promotes differentiation of T-cells into induced regulatory T-cells (iTregs) associated with suppressive functions. Acetylation is mediated by a coordinated action of KAT5 and EP300/p300 acetyltransferases: EP300/p300 is required to enhance KAT5 autoacetylation, promoting acetylation of FOXP3 by KAT5. Deacetylated by SIRT1. In terms of processing, undergoes proteolytic cleavage in activated regulatory T-cells (Treg), and can be cleaved at either the N- or C-terminal site, or at both sites.

It is found in the nucleus. The protein localises to the cytoplasm. Transcriptional regulator which is crucial for the development and inhibitory function of regulatory T-cells (Treg). Plays an essential role in maintaining homeostasis of the immune system by allowing the acquisition of full suppressive function and stability of the Treg lineage, and by directly modulating the expansion and function of conventional T-cells. Can act either as a transcriptional repressor or a transcriptional activator depending on its interactions with other transcription factors, histone acetylases and deacetylases. The suppressive activity of Treg involves the coordinate activation of many genes, including CTLA4 and TNFRSF18 by FOXP3 along with repression of genes encoding cytokines such as interleukin-2 (IL2) and interferon-gamma (IFNG). Inhibits cytokine production and T-cell effector function by repressing the activity of two key transcription factors, RELA and NFATC2. Mediates transcriptional repression of IL2 via its association with histone acetylase KAT5 and histone deacetylase HDAC7. Can activate the expression of TNFRSF18, IL2RA and CTLA4 and repress the expression of IL2 and IFNG via its association with transcription factor RUNX1. Inhibits the differentiation of IL17 producing helper T-cells (Th17) by antagonizing RORC function, leading to down-regulation of IL17 expression, favoring Treg development. Inhibits the transcriptional activator activity of RORA. Can repress the expression of IL2 and IFNG via its association with transcription factor IKZF4. The chain is Forkhead box protein P3 (FOXP3) from Homo sapiens (Human).